The sequence spans 733 residues: Catalase-peroxidase (733 aa).

Residues 1–25 (MNEERKCPITGATHKPSAEKGRSNH) are disordered. A compositionally biased stretch (basic and acidic residues) spans 16 to 25 (PSAEKGRSNH). Positions 96–219 (WHSAGTYRTS…LAAVQMGLIY (124 aa)) form a cross-link, tryptophyl-tyrosyl-methioninium (Trp-Tyr) (with M-245). The active-site Proton acceptor is the H97. Positions 219 to 245 (YVNPEGPNGKPDPLAAAKDIRETFARM) form a cross-link, tryptophyl-tyrosyl-methioninium (Tyr-Met) (with W-96). Residue H260 coordinates heme b.

Belongs to the peroxidase family. Peroxidase/catalase subfamily. In terms of assembly, homodimer or homotetramer. It depends on heme b as a cofactor. Formation of the three residue Trp-Tyr-Met cross-link is important for the catalase, but not the peroxidase activity of the enzyme.

The enzyme catalyses H2O2 + AH2 = A + 2 H2O. The catalysed reaction is 2 H2O2 = O2 + 2 H2O. Functionally, bifunctional enzyme with both catalase and broad-spectrum peroxidase activity. The chain is Catalase-peroxidase from Chlorobium chlorochromatii (strain CaD3).